Consider the following 149-residue polypeptide: Nucleoside diphosphate kinase (149 aa).

Positions 9, 57, 85, 91, 102, and 112 each coordinate ATP. The Pros-phosphohistidine intermediate role is filled by histidine 115.

This sequence belongs to the NDK family. The cofactor is Mg(2+).

The protein localises to the cytoplasm. The catalysed reaction is a 2'-deoxyribonucleoside 5'-diphosphate + ATP = a 2'-deoxyribonucleoside 5'-triphosphate + ADP. It carries out the reaction a ribonucleoside 5'-diphosphate + ATP = a ribonucleoside 5'-triphosphate + ADP. Major role in the synthesis of nucleoside triphosphates other than ATP. The ATP gamma phosphate is transferred to the NDP beta phosphate via a ping-pong mechanism, using a phosphorylated active-site intermediate. This is Nucleoside diphosphate kinase from Methanosarcina acetivorans (strain ATCC 35395 / DSM 2834 / JCM 12185 / C2A).